A 332-amino-acid chain; its full sequence is Ketol-acid reductoisomerase (NADP(+)) (332 aa).

One can recognise a KARI N-terminal Rossmann domain in the interval 2-182 (AKIYTDKDVS…GATRAGVIET (181 aa)). NADP(+) is bound by residues 25-28 (YGSQ), S53, and 83-86 (DMIQ). The active site involves H108. G134 serves as a coordination point for NADP(+). The region spanning 183-328 (TFKEETETDL…RSLRDIILRG (146 aa)) is the KARI C-terminal knotted domain. Mg(2+) is bound by residues D191, E195, E227, and E231. S252 is a binding site for substrate.

The protein belongs to the ketol-acid reductoisomerase family. Mg(2+) is required as a cofactor.

It carries out the reaction (2R)-2,3-dihydroxy-3-methylbutanoate + NADP(+) = (2S)-2-acetolactate + NADPH + H(+). It catalyses the reaction (2R,3R)-2,3-dihydroxy-3-methylpentanoate + NADP(+) = (S)-2-ethyl-2-hydroxy-3-oxobutanoate + NADPH + H(+). It functions in the pathway amino-acid biosynthesis; L-isoleucine biosynthesis; L-isoleucine from 2-oxobutanoate: step 2/4. The protein operates within amino-acid biosynthesis; L-valine biosynthesis; L-valine from pyruvate: step 2/4. In terms of biological role, involved in the biosynthesis of branched-chain amino acids (BCAA). Catalyzes an alkyl-migration followed by a ketol-acid reduction of (S)-2-acetolactate (S2AL) to yield (R)-2,3-dihydroxy-isovalerate. In the isomerase reaction, S2AL is rearranged via a Mg-dependent methyl migration to produce 3-hydroxy-3-methyl-2-ketobutyrate (HMKB). In the reductase reaction, this 2-ketoacid undergoes a metal-dependent reduction by NADPH to yield (R)-2,3-dihydroxy-isovalerate. This is Ketol-acid reductoisomerase (NADP(+)) from Sulfolobus acidocaldarius (strain ATCC 33909 / DSM 639 / JCM 8929 / NBRC 15157 / NCIMB 11770).